The primary structure comprises 445 residues: Adenine permease AdeP (445 aa).

At 1-28 the chain is on the cytoplasmic side; the sequence is MSHQHTTQTSGQGMLERVFKLREHGTTA. Residues 29–52 form a helical membrane-spanning segment; it reads RTEVIAGFTTFLTMVYIVFVNPQI. Residues 53–62 lie on the Periplasmic side of the membrane; sequence LGVAGMDTSA. A helical transmembrane segment spans residues 63–81; that stretch reads VFVTTCLIAAFGSIMMGLF. Residues 82-83 are Cytoplasmic-facing; sequence AN. The discontinuously helical transmembrane segment at 84–100 threads the bilayer; that stretch reads LPVALAPAMGLNAFFAF. Residues 101 to 112 are Periplasmic-facing; sequence VVVQAMGLPWQV. A helical membrane pass occupies residues 113–132; that stretch reads GMGAIFWGAIGLLLLTIFRV. The Cytoplasmic segment spans residues 133 to 144; that stretch reads RYWMIANIPVSL. Residues 145–165 traverse the membrane as a helical segment; sequence RVGITSGIGLFIGMMGLKNAG. The Periplasmic segment spans residues 166–181; sequence VIVANPETLVSIGNLT. Residues 182–199 form a helical membrane-spanning segment; that stretch reads SHSVLLGILGFFIIAILA. Topologically, residues 200-203 are cytoplasmic; sequence SRNI. A helical membrane pass occupies residues 204 to 222; it reads HAAVLVSIVVTTLLGWMLG. Topologically, residues 223-250 are periplasmic; that stretch reads DVHYNGIVSAPPSVMTVVGHVDLAGSFN. Residues 251–279 traverse the membrane as a helical segment; it reads LGLAGVIFSFMLVNLFDSSGTLIGVTDKA. Residues 280 to 292 lie on the Cytoplasmic side of the membrane; it reads GLADEKGKFPRMK. Residues 293 to 308 traverse the membrane as a helical segment; the sequence is QALYVDSISSVTGSFI. Topologically, residues 309–310 are periplasmic; the sequence is GT. Residues 311–326 form a discontinuously helical membrane-spanning segment; it reads SSVTAYIESSSGVSVG. The Cytoplasmic portion of the chain corresponds to 327 to 330; the sequence is GRTG. The helical transmembrane segment at 331–345 threads the bilayer; it reads LTAVVVGLLFLLVIF. Residues 346–356 are Periplasmic-facing; the sequence is LSPLAGMVPGY. Residues 357–376 form a helical membrane-spanning segment; that stretch reads AAAGALIYVGVLMTSSLARV. At 377-381 the chain is on the cytoplasmic side; sequence NWQDL. The discontinuously helical intramembrane region spans 382–417; that stretch reads TESVPAFITAVMMPFSFSITEGIALGFISYCVMKIG. At 418–445 the chain is on the cytoplasmic side; that stretch reads TGRLRDLSPCVIIVALLFILKIVFIDAH.

The protein belongs to the nucleobase:cation symporter-2 (NCS2) (TC 2.A.40) family. Azg-like subfamily.

The protein localises to the cell inner membrane. Internal adenine may inhibit transport. Functionally, high-affinity transporter for adenine. This chain is Adenine permease AdeP (adeP), found in Escherichia coli (strain K12).